The following is a 548-amino-acid chain: Membrane protein insertase YidC (548 aa).

The helical transmembrane segment at 6–26 (NLLVIALLFVSFMIWQAWEQD) threads the bilayer. Positions 28-56 (NPQPQTQQTTQTTTTAAGSAADQGVPASG) are disordered. Residues 29-42 (PQPQTQQTTQTTTT) are compositionally biased toward low complexity. The next 4 helical transmembrane spans lie at 350–370 (FVGNWGFSIIIITFIVRGIMY), 424–444 (FPLIIQMPIFLALYYMLMGSI), 458–478 (LSAQDPYYILPILMGVTMFFI), and 499–519 (PVIFTVFFLWFPSGLVLYYIV).

The protein belongs to the OXA1/ALB3/YidC family. Type 1 subfamily. As to quaternary structure, interacts with the Sec translocase complex via SecD. Specifically interacts with transmembrane segments of nascent integral membrane proteins during membrane integration.

The protein resides in the cell inner membrane. In terms of biological role, required for the insertion and/or proper folding and/or complex formation of integral membrane proteins into the membrane. Involved in integration of membrane proteins that insert both dependently and independently of the Sec translocase complex, as well as at least some lipoproteins. Aids folding of multispanning membrane proteins. The polypeptide is Membrane protein insertase YidC (Salmonella dublin (strain CT_02021853)).